A 388-amino-acid chain; its full sequence is Lipid-A-disaccharide synthase (388 aa).

This sequence belongs to the LpxB family.

The catalysed reaction is a lipid X + a UDP-2-N,3-O-bis[(3R)-3-hydroxyacyl]-alpha-D-glucosamine = a lipid A disaccharide + UDP + H(+). It participates in bacterial outer membrane biogenesis; LPS lipid A biosynthesis. Condensation of UDP-2,3-diacylglucosamine and 2,3-diacylglucosamine-1-phosphate to form lipid A disaccharide, a precursor of lipid A, a phosphorylated glycolipid that anchors the lipopolysaccharide to the outer membrane of the cell. This is Lipid-A-disaccharide synthase from Burkholderia pseudomallei (strain K96243).